The sequence spans 258 residues: Imidazole glycerol phosphate synthase subunit HisF (258 aa).

Catalysis depends on residues Asp11 and Asp130.

The protein belongs to the HisA/HisF family. In terms of assembly, heterodimer of HisH and HisF.

Its subcellular location is the cytoplasm. The catalysed reaction is 5-[(5-phospho-1-deoxy-D-ribulos-1-ylimino)methylamino]-1-(5-phospho-beta-D-ribosyl)imidazole-4-carboxamide + L-glutamine = D-erythro-1-(imidazol-4-yl)glycerol 3-phosphate + 5-amino-1-(5-phospho-beta-D-ribosyl)imidazole-4-carboxamide + L-glutamate + H(+). It functions in the pathway amino-acid biosynthesis; L-histidine biosynthesis; L-histidine from 5-phospho-alpha-D-ribose 1-diphosphate: step 5/9. In terms of biological role, IGPS catalyzes the conversion of PRFAR and glutamine to IGP, AICAR and glutamate. The HisF subunit catalyzes the cyclization activity that produces IGP and AICAR from PRFAR using the ammonia provided by the HisH subunit. In Escherichia coli O6:K15:H31 (strain 536 / UPEC), this protein is Imidazole glycerol phosphate synthase subunit HisF.